Here is a 129-residue protein sequence, read N- to C-terminus: Large ribosomal subunit protein bL17 (129 aa).

The protein belongs to the bacterial ribosomal protein bL17 family. In terms of assembly, part of the 50S ribosomal subunit. Contacts protein L32.

This is Large ribosomal subunit protein bL17 from Hahella chejuensis (strain KCTC 2396).